We begin with the raw amino-acid sequence, 418 residues long: Actin-related protein 3B (418 aa).

It belongs to the actin family. ARP3 subfamily. Interacts with the Arp2/3 complex composed of ARP2, ARP3, ARPC1B, ARPC1B/p41-ARC, ARPC2/p34-ARC, ARPC3/p21-ARC, ARPC4/p20-ARC and ARPC5/p16-ARC.

The protein resides in the cytoplasm. Its subcellular location is the cytoskeleton. The protein localises to the cell projection. Its function is as follows. Plays a role in the organization of the actin cytoskeleton. May function as ATP-binding component of the Arp2/3 complex which is involved in regulation of actin polymerization and together with an activating nucleation-promoting factor (NPF) mediates the formation of branched actin networks. May decrease the metastatic potential of tumors. In Mus musculus (Mouse), this protein is Actin-related protein 3B (Actr3b).